A 339-amino-acid polypeptide reads, in one-letter code: Cathepsin B (339 aa).

An N-terminal signal peptide occupies residues 1 to 17; sequence MWQLWASLCCLLVLANA. The propeptide at 18-79 is activation peptide; sequence RSRPSFHPLS…QRVMFTEDLK (62 aa). 6 disulfide bridges follow: Cys93–Cys122, Cys105–Cys150, Cys141–Cys207, Cys142–Cys146, Cys179–Cys211, and Cys187–Cys198. The active site involves Cys108. N-linked (GlcNAc...) asparagine glycosylation is present at Asn192. Lys220 is modified (N6-acetyllysine). Catalysis depends on residues His278 and Asn298. Positions 334-339 are excised as a propeptide; that stretch reads QYWEKI.

This sequence belongs to the peptidase C1 family. As to quaternary structure, dimer of a heavy chain and a light chain cross-linked by a disulfide bond. Interacts with SRPX2. Directly interacts with SHKBP1. Expressed in the stratum spinosum of the epidermis. Weak expression is detected in the stratum granulosum.

The protein resides in the lysosome. Its subcellular location is the melanosome. The protein localises to the secreted. It is found in the extracellular space. It localises to the apical cell membrane. It catalyses the reaction Hydrolysis of proteins with broad specificity for peptide bonds. Preferentially cleaves -Arg-Arg-|-Xaa bonds in small molecule substrates (thus differing from cathepsin L). In addition to being an endopeptidase, shows peptidyl-dipeptidase activity, liberating C-terminal dipeptides.. Inhibited by leupeptin. In terms of biological role, thiol protease which is believed to participate in intracellular degradation and turnover of proteins. Cleaves matrix extracellular phosphoglycoprotein MEPE. Involved in the solubilization of cross-linked TG/thyroglobulin in the thyroid follicle lumen. Has also been implicated in tumor invasion and metastasis. The sequence is that of Cathepsin B (CTSB) from Homo sapiens (Human).